The following is a 137-amino-acid chain: ATP synthase epsilon chain, chloroplastic (137 aa).

Belongs to the ATPase epsilon chain family. F-type ATPases have 2 components, CF(1) - the catalytic core - and CF(0) - the membrane proton channel. CF(1) has five subunits: alpha(3), beta(3), gamma(1), delta(1), epsilon(1). CF(0) has three main subunits: a, b and c.

The protein resides in the plastid. Its subcellular location is the chloroplast thylakoid membrane. Functionally, produces ATP from ADP in the presence of a proton gradient across the membrane. This chain is ATP synthase epsilon chain, chloroplastic, found in Pisum sativum (Garden pea).